Reading from the N-terminus, the 434-residue chain is ATP-sensitive inward rectifier potassium channel 14 (434 aa).

Residues Met1–Asp81 are Cytoplasmic-facing. An S-nitrosocysteine modification is found at Cys79. The chain crosses the membrane as a helical span at residues Val82 to Leu108. Over Ile109–Ser131 the chain is Extracellular. Positions Phe132 to Tyr148 form an intramembrane region, helical; Pore-forming. Positions Ser145–Val150 match the Selectivity filter motif. At Gly149–Cys157 the chain is on the extracellular side. Residues Pro158–Lys185 form a helical membrane-spanning segment. Over Met186–Pro434 the chain is Cytoplasmic. The tract at residues Gln398–Pro434 is disordered. Positions Lys407–Asp416 are enriched in basic and acidic residues. Over residues Ala418–Pro434 the composition is skewed to low complexity.

The protein belongs to the inward rectifier-type potassium channel (TC 1.A.2.1) family. KCNJ14 subfamily. As to expression, expressed predominantly in motoneurons of cranial nerve motor nuclei within the general somatic and special visceral motor cell column.

The protein resides in the membrane. It carries out the reaction K(+)(in) = K(+)(out). Channel activity is regulated by variations of cytosolic pH; channels are activated by alkaline and inhibited by acidic pH values. Inhibited by Ba(2+) and Cs(+) in a voltage-dependent manner; sensitivity to those inhibitors is lower than in other Kir channels. Functionally, inward rectifier potassium channels are characterized by a greater tendency to allow potassium to flow into the cell rather than out of it. Their voltage dependence is regulated by the concentration of extracellular potassium; as external potassium is raised, the voltage range of the channel opening shifts to more positive voltages. This chain is ATP-sensitive inward rectifier potassium channel 14 (Kcnj14), found in Rattus norvegicus (Rat).